The primary structure comprises 374 residues: Transaldolase (374 aa).

The active-site Schiff-base intermediate with substrate is lysine 140.

Belongs to the transaldolase family. Type 2 subfamily.

It localises to the cytoplasm. The catalysed reaction is D-sedoheptulose 7-phosphate + D-glyceraldehyde 3-phosphate = D-erythrose 4-phosphate + beta-D-fructose 6-phosphate. It participates in carbohydrate degradation; pentose phosphate pathway; D-glyceraldehyde 3-phosphate and beta-D-fructose 6-phosphate from D-ribose 5-phosphate and D-xylulose 5-phosphate (non-oxidative stage): step 2/3. In terms of biological role, transaldolase is important for the balance of metabolites in the pentose-phosphate pathway. The sequence is that of Transaldolase from Renibacterium salmoninarum (strain ATCC 33209 / DSM 20767 / JCM 11484 / NBRC 15589 / NCIMB 2235).